The following is a 190-amino-acid chain: Glutathione peroxidase 2 (190 aa).

Residue Sec40 is part of the active site. A non-standard amino acid (selenocysteine) is located at residue Sec40.

This sequence belongs to the glutathione peroxidase family. In terms of assembly, homotetramer.

It is found in the cytoplasm. It localises to the cytosol. The enzyme catalyses 2 glutathione + H2O2 = glutathione disulfide + 2 H2O. The catalysed reaction is a hydroperoxy polyunsaturated fatty acid + 2 glutathione = a hydroxy polyunsaturated fatty acid + glutathione disulfide + H2O. It catalyses the reaction tert-butyl hydroperoxide + 2 glutathione = tert-butanol + glutathione disulfide + H2O. It carries out the reaction cumene hydroperoxide + 2 glutathione = 2-phenylpropan-2-ol + glutathione disulfide + H2O. The enzyme catalyses (13S)-hydroperoxy-(9Z,11E)-octadecadienoate + 2 glutathione = (13S)-hydroxy-(9Z,11E)-octadecadienoate + glutathione disulfide + H2O. The catalysed reaction is (5S)-hydroperoxy-(6E,8Z,11Z,14Z)-eicosatetraenoate + 2 glutathione = (5S)-hydroxy-(6E,8Z,11Z,14Z)-eicosatetraenoate + glutathione disulfide + H2O. It catalyses the reaction (12R)-hydroperoxy-(5Z,8Z,10E,14Z)-eicosatetraenoate + 2 glutathione = (12R)-hydroxy-(5Z,8Z,10E,14Z)-eicosatetraenoate + glutathione disulfide + H2O. It carries out the reaction (15S)-hydroperoxy-(5Z,8Z,11Z,13E)-eicosatetraenoate + 2 glutathione = (15S)-hydroxy-(5Z,8Z,11Z,13E)-eicosatetraenoate + glutathione disulfide + H2O. Functionally, catalyzes the reduction of hydroperoxides in a glutathione-dependent manner thus regulating cellular redox homeostasis. Can reduce small soluble hydroperoxides such as H2O2, cumene hydroperoxide and tert-butyl hydroperoxide, as well as several fatty acid-derived hydroperoxides. Cannot reduce phosphatidycholine hydroperoxide. This Sapajus apella (Brown-capped capuchin) protein is Glutathione peroxidase 2 (GPX2).